We begin with the raw amino-acid sequence, 302 residues long: Cyclin-C (302 aa).

One can recognise a Cyclin N-terminal domain in the interval 46–152; the sequence is NFITAVATEG…VYDSEFILVE (107 aa). Residues 281–302 are disordered; it reads LPKPNQQPPPQQQHQHQQGYHL. Over residues 292 to 302 the composition is skewed to low complexity; sequence QQHQHQQGYHL.

Belongs to the cyclin family. Cyclin C subfamily. In terms of assembly, component of the Mediator complex.

It localises to the nucleus. Component of the Mediator complex, a coactivator involved in regulated gene transcription of nearly all RNA polymerase II-dependent genes. Mediator functions as a bridge to convey information from gene-specific regulatory proteins to the basal RNA polymerase II transcription machinery. Mediator is recruited to promoters by direct interactions with regulatory proteins and serves as a scaffold for the assembly of a functional preinitiation complex with RNA polymerase II and the general transcription factors. Binds to and activates cyclin-dependent kinase cdk-8 that phosphorylates the CTD (C-terminal domain) of the large subunit of RNA polymerase II (RNAp II), which may inhibit the formation of a transcription initiation complex. This Caenorhabditis elegans protein is Cyclin-C (cic-1).